Consider the following 632-residue polypeptide: Chaperone protein DnaK (632 aa).

At T198 the chain carries Phosphothreonine; by autocatalysis.

It belongs to the heat shock protein 70 family.

Functionally, acts as a chaperone. The chain is Chaperone protein DnaK from Rhodopseudomonas palustris (strain BisB18).